Here is a 2037-residue protein sequence, read N- to C-terminus: MSTHRPFQLTHGSIEHTLLVPNDLFFNYSQLKDEFIKTLPEPTEGFAGDDEPSSPAELYGKFIGFISNAQFPQIVELSLKDFESRFLDNNNDNIHSFAVKLLDDETYPTTIAKVKENIVKNYYKAVKSINKVESNLLYHCKHDAKLVAIFGGQGNTDDYFEELRELYTLYQGLIEDLLVSIAEKLNQLHPSFDKIYTQGLNILSWLKHPETTPDQDYLLSVPVSCPVICVIQLCHYTITCKVLGLTPGEFRNSLKWSTGHSQGLVTAVTIAASDSWDSFLKNSLTAVSLLLFIGSRCLSTYPRTSLPPTMLQDSLDNGEGRPSPMLSVRDLSIKQVEKFIEQTNSHLPREKHIAISLINGARNLVLSGPPESLYGFNLNLRNQKAPMGLDQSRVPFSERKLKCSNRFLPIFAPFHSHLLADATELILDDVKEHGLSFEGLKIPVYDTFDGSDFQALKEPIIDRVVKLITELPVHWEEATNHKATHILDFGPGGVSGLGVLTHRNKEGTGARIILAGTLDSNPIDDEYGFKHEIFQTSADKAIKWAPDWLKELRPTLVKNSEGKIYVKTKFSQLLGRAPLMVAGMTPTTVNTDIVSASLNAGYHIELAGGGYFSPVMMTRAIDDIVSRIKPGYGLGINLIYVNPFMLQWGIPLIKDLREKGYPIQSLTIGAGVPSIEVATEYIEDLGLTHLGLKPGSVDAISQVIAIAKAHPTFPIVLQWTGGRGGGHHSFEDFHQPIIQMYSKIRRCSNIVLVAGSGFGSDEDTYPYLSGYWSEKFNYPPMPFDGVLFGSRVMTSKESHTSLAAKKLIVECKGVPDQQWEQTYKKPTGGIITVRSEMGEPIHKIATRGVMFWKELDDTIFNLPKNKLLDALNKKRDHIIKKLNNDFQKPWFGKNANGVCDLQEMTYKEVANRLVELMYVKKSHRWIDVSLRNMYGDFLRRVEERFTSSAGTVSLLQNFNQLNEPEQFTADFFEKFPQAGKQLISEEDCDYFLMLAARPGQKPVPFVPVLDERFEFFFKKDSLWQSEDLESVVDEDVQRTCILHGPVASQYTSKVDEPIGDILNSIHEGHIARLIKEEYAGDESKIPVVEYFGGKKPASVSATSVNIIDGNQVVYEIDSELPNKQEWLDLLAGTELNWLQAFISTDRIVQGSKHVSNPLHDILTPAKHSKVTIDKKTKKLTAFENIKGDLLPVVEIELVKPNTIQLSLIEHRTADTNPVALPFLYKYNPADGFAPILEIMEDRNERIKEFYWKLWFGSSVPYSNDINVEKAILGDEITISSQTISEFTHAIGNKCDAFVDRPGKATLAPMDFAIVIGWKAIIKAIFPKSVDGDLLKLVHLSNGYKMITGAAPLKKGDVVSTKAEIKAVLNQPSGKLVEVVGTIYREGKPVMEVTSQFLYRGEYNDYCNTFQKVTETPVQVAFKSAKDLAVLRSKEWFHLEKDVQFDVLTFRCESTYKFKSANVYSSIKTTGQVLLELPTKEVIQVGSVDYEAGTSYGNPVTDYLSRNGKTIEESVIFENAIPLSSGEELTSKAPGTNEPYAIVSGDYNPIHVSRVFAAYAKLPGTITHGMYSSASIRALVEEWAANNVAARVRAFKCDFVGMVLPNDTLQTTMEHVGMINGRKIIKVETRNVETELPVLIGEAEIEQPTTTYVFTGQGSQEQGMGMELYNSSEVAREVWDKADRHFVNNYGFSILDIVQNNPNELTIHFGGAKGRAIRDNYIGMMFETIGEDGALKSEKIFKDIDETTTSYTFVSPTGLLSATQFTQPALTLMEKAAYEDIKSKGLIPSDIMFAGHSLGEYSALSSLANVMPIESLVDVVFYRGMTMQVAVPRDELGRSNYGMVAVNPSRVSATFDDSALRFVVDEVANKTKWLLEIVNYNVENQQYVAAGDLRALDTLTNVLNVLKINKIDIVKLQEQMSIEKVKEHLYEIVDEVAAKSLAKPQPIDLERGFAVIPLKGISVPFHSSYLMSGVKPFQRFLCKKIPKSSVKPQDLIGKYIPNLTAKPFELTKEYFQSVYDLTKSEKIKSILDNWEQYE.

The interval 1–453 is acetyltransferase; sequence MSTHRPFQLT…VYDTFDGSDF (453 aa). Residue serine 261 is the For acetyltransferase activity of the active site. The segment at 465-798 is enoyl reductase; sequence VKLITELPVH…GSRVMTSKES (334 aa). The segment at 1132–1612 is dehydratase; that stretch reads GTELNWLQAF…LPNDTLQTTM (481 aa). Positions 1506-1634 constitute a MaoC-like domain; it reads NGKTIEESVI…KVETRNVETE (129 aa). Residues 1613–1833 are malonyl/palmitoyl transferase; the sequence is EHVGMINGRK…MTMQVAVPRD (221 aa). Serine 1796 acts as the For malonyltransferase activity in catalysis.

This sequence belongs to the fungal fatty acid synthetase subunit beta family. In terms of assembly, [Alpha(6)beta(6)] hexamers of two multifunctional subunits (alpha and beta).

It catalyses the reaction acetyl-CoA + n malonyl-CoA + 2n NADPH + 4n H(+) = a long-chain-acyl-CoA + n CoA + n CO2 + 2n NADP(+).. It carries out the reaction holo-[ACP] + acetyl-CoA = acetyl-[ACP] + CoA. The catalysed reaction is holo-[ACP] + malonyl-CoA = malonyl-[ACP] + CoA. The enzyme catalyses a (3R)-hydroxyacyl-[ACP] = a (2E)-enoyl-[ACP] + H2O. It catalyses the reaction a 2,3-saturated acyl-[ACP] + NAD(+) = a (2E)-enoyl-[ACP] + NADH + H(+). It carries out the reaction (9Z)-octadecenoyl-[ACP] + H2O = (9Z)-octadecenoate + holo-[ACP] + H(+). In terms of biological role, fatty acid synthetase catalyzes the formation of long-chain fatty acids from acetyl-CoA, malonyl-CoA and NADPH. The beta subunit contains domains for: [acyl-carrier-protein] acetyltransferase and malonyltransferase, S-acyl fatty acid synthase thioesterase, enoyl-[acyl-carrier-protein] reductase, and 3-hydroxypalmitoyl-[acyl-carrier-protein] dehydratase. The chain is Fatty acid synthase subunit beta (FAS1) from Candida albicans (Yeast).